The sequence spans 233 residues: Phosphatidylserine decarboxylase proenzyme (233 aa).

Ser201 acts as the Schiff-base intermediate with substrate; via pyruvic acid in catalysis. Ser201 is modified (pyruvic acid (Ser); by autocatalysis).

Belongs to the phosphatidylserine decarboxylase family. PSD-A subfamily. As to quaternary structure, heterodimer of a large membrane-associated beta subunit and a small pyruvoyl-containing alpha subunit. It depends on pyruvate as a cofactor. Post-translationally, is synthesized initially as an inactive proenzyme. Formation of the active enzyme involves a self-maturation process in which the active site pyruvoyl group is generated from an internal serine residue via an autocatalytic post-translational modification. Two non-identical subunits are generated from the proenzyme in this reaction, and the pyruvate is formed at the N-terminus of the alpha chain, which is derived from the carboxyl end of the proenzyme. The post-translation cleavage follows an unusual pathway, termed non-hydrolytic serinolysis, in which the side chain hydroxyl group of the serine supplies its oxygen atom to form the C-terminus of the beta chain, while the remainder of the serine residue undergoes an oxidative deamination to produce ammonia and the pyruvoyl prosthetic group on the alpha chain.

The protein resides in the cell membrane. It carries out the reaction a 1,2-diacyl-sn-glycero-3-phospho-L-serine + H(+) = a 1,2-diacyl-sn-glycero-3-phosphoethanolamine + CO2. It functions in the pathway phospholipid metabolism; phosphatidylethanolamine biosynthesis; phosphatidylethanolamine from CDP-diacylglycerol: step 2/2. Its function is as follows. Catalyzes the formation of phosphatidylethanolamine (PtdEtn) from phosphatidylserine (PtdSer). The protein is Phosphatidylserine decarboxylase proenzyme of Mycolicibacterium vanbaalenii (strain DSM 7251 / JCM 13017 / BCRC 16820 / KCTC 9966 / NRRL B-24157 / PYR-1) (Mycobacterium vanbaalenii).